Here is a 305-residue protein sequence, read N- to C-terminus: Putative lipid kinase SaurJH9_0749 (305 aa).

The DAGKc domain occupies N3–Y139. Residues S44, G74–E80, and T101 contribute to the ATP site. Mg(2+) contacts are provided by S220, D223, and E225. E281 acts as the Proton acceptor in catalysis.

It belongs to the diacylglycerol/lipid kinase family. It depends on Mg(2+) as a cofactor.

Its function is as follows. May catalyze the ATP-dependent phosphorylation of lipids other than diacylglycerol (DAG). This Staphylococcus aureus (strain JH9) protein is Putative lipid kinase SaurJH9_0749.